A 279-amino-acid chain; its full sequence is Undecaprenyl-diphosphatase (279 aa).

Transmembrane regions (helical) follow at residues 17–37 (TEFL…FFPF), 46–66 (AFED…VVVL), 92–112 (FQFY…GFLL), 123–143 (SDLL…MVFV), 156–176 (IGFK…IPGV), 197–217 (AEFS…YKLY), 226–246 (ETIG…YFII), and 257–277 (SFIS…LYFV).

This sequence belongs to the UppP family.

It localises to the cell inner membrane. It catalyses the reaction di-trans,octa-cis-undecaprenyl diphosphate + H2O = di-trans,octa-cis-undecaprenyl phosphate + phosphate + H(+). Its function is as follows. Catalyzes the dephosphorylation of undecaprenyl diphosphate (UPP). Confers resistance to bacitracin. This Leptospira biflexa serovar Patoc (strain Patoc 1 / ATCC 23582 / Paris) protein is Undecaprenyl-diphosphatase.